The chain runs to 232 residues: Orotidine 5'-phosphate decarboxylase (232 aa).

Substrate contacts are provided by residues aspartate 13, lysine 35, 62 to 71 (DLKFHDIPNT), threonine 121, arginine 182, glutamine 191, glycine 211, and arginine 212. Lysine 64 acts as the Proton donor in catalysis.

It belongs to the OMP decarboxylase family. Type 1 subfamily. In terms of assembly, homodimer.

It carries out the reaction orotidine 5'-phosphate + H(+) = UMP + CO2. The protein operates within pyrimidine metabolism; UMP biosynthesis via de novo pathway; UMP from orotate: step 2/2. Its function is as follows. Catalyzes the decarboxylation of orotidine 5'-monophosphate (OMP) to uridine 5'-monophosphate (UMP). This Acinetobacter baumannii (strain ACICU) protein is Orotidine 5'-phosphate decarboxylase.